The primary structure comprises 614 residues: Zinc metalloproteinase-disintegrin-like BmMP (614 aa).

The signal sequence occupies residues 1–20 (MIQALLVTICLAVFPYQGSS). Residues 21-188 (IILESGNVND…WESDEPIRNA (168 aa)) constitute a propeptide that is removed on maturation. Asparagine 187 carries N-linked (GlcNAc...) asparagine glycosylation. The Peptidase M12B domain maps to 205-401 (KYIEFYVAVD…DRPQCILNKP (197 aa)). 17 cysteine pairs are disulfide-bonded: cysteine 316–cysteine 396, cysteine 356–cysteine 380, cysteine 359–cysteine 364, cysteine 412–cysteine 441, cysteine 423–cysteine 436, cysteine 425–cysteine 431, cysteine 435–cysteine 458, cysteine 449–cysteine 455, cysteine 454–cysteine 480, cysteine 467–cysteine 487, cysteine 474–cysteine 506, cysteine 499–cysteine 511, cysteine 518–cysteine 568, cysteine 533–cysteine 576, cysteine 546–cysteine 556, cysteine 563–cysteine 602, and cysteine 596–cysteine 607. Histidine 341 is a binding site for Zn(2+). The active site involves glutamate 342. Zn(2+) contacts are provided by histidine 345 and histidine 351. The Disintegrin domain occupies 409–495 (PAICGNYFVE…ECPTDIFRRN (87 aa)). A D/ECD-tripeptide motif is present at residues 473–475 (DCD).

The protein belongs to the venom metalloproteinase (M12B) family. P-III subfamily. P-IIIa sub-subfamily. Monomer. The cofactor is Zn(2+). As to expression, expressed by the venom gland.

Its subcellular location is the secreted. Its function is as follows. Snake venom zinc metalloproteinase that inhibits platelet aggregation and degrades fibrinogen. This is Zinc metalloproteinase-disintegrin-like BmMP from Bungarus multicinctus (Many-banded krait).